An 830-amino-acid polypeptide reads, in one-letter code: AdoMet-dependent rRNA methyltransferase SPB1 (830 aa).

S-adenosyl-L-methionine contacts are provided by G58, W60, D78, D94, and D119. K159 acts as the Proton acceptor in catalysis. Residues 345 to 388 (LTEEEQIEKELQEMQQKQNLKKKREKRKQNEIKQKEITRMQMQM) are a coiled coil. Disordered regions lie at residues 485–529 (AKEA…SDSD) and 565–642 (EADL…AREV). Acidic residues-rich tracts occupy residues 516–529 (VDDD…SDSD), 591–610 (VSEE…DSDF), and 618–630 (DESD…EDEA). A compositionally biased stretch (basic and acidic residues) spans 631–642 (ERSQKEKHAREV).

Belongs to the class I-like SAM-binding methyltransferase superfamily. RNA methyltransferase RlmE family. SPB1 subfamily. Component of the nucleolar and nucleoplasmic pre-60S ribosomal particle.

The protein resides in the nucleus. Its subcellular location is the nucleolus. It catalyses the reaction a ribonucleotide in rRNA + S-adenosyl-L-methionine = a 2'-O-methylribonucleotide in rRNA + S-adenosyl-L-homocysteine + H(+). In terms of biological role, required for proper assembly of pre-ribosomal particles during the biogenesis of the 60S ribosomal subunit. In Eremothecium gossypii (strain ATCC 10895 / CBS 109.51 / FGSC 9923 / NRRL Y-1056) (Yeast), this protein is AdoMet-dependent rRNA methyltransferase SPB1.